Consider the following 81-residue polypeptide: uncharacterized protein (81 aa).

Transmembrane regions (helical) follow at residues 1 to 21 (MTLFSFFLVILSFYYILFSLL) and 27 to 47 (IFIYIKIIPTVSYFHFNHHFF).

It localises to the membrane. This is an uncharacterized protein from Saccharomyces cerevisiae (strain ATCC 204508 / S288c) (Baker's yeast).